The chain runs to 33 residues: Kappa-sparatoxin-Hv1a (33 aa).

Disulfide bonds link C2–C17, C9–C22, and C16–C27. A Tryptophan amide modification is found at W33.

In terms of tissue distribution, expressed by the venom gland.

It is found in the secreted. Functionally, blocks transient outward voltage-gated potassium channels in rat ventricular myocytes (thus prolonging action-potential duration) and rat Kv4.2/KCNA4 channels expressed in Xenopus oocytes. Is also a weak blocker of calcium channels in rat cerebellar granule cells. This Heteropoda venatoria (Brown huntsman spider) protein is Kappa-sparatoxin-Hv1a.